We begin with the raw amino-acid sequence, 269 residues long: Fructose-2,6-bisphosphatase TIGAR (269 aa).

His11 (tele-phosphohistidine intermediate) is an active-site residue. Glu89 (proton donor/acceptor) is an active-site residue.

Belongs to the phosphoglycerate mutase family. Interacts with HK2; the interaction increases hexokinase HK2 activity in a hypoxia- and HIF1A-dependent manner, resulting in the regulation of mitochondrial membrane potential, thus increasing NADPH production and decreasing intracellular ROS levels. Expressed in olfactory bulb, cerebellum, and cortex. Expressed in neurons and astrocytes (at protein level). Expressed in intestinal crypt.

The protein localises to the cytoplasm. The protein resides in the nucleus. It is found in the mitochondrion. It catalyses the reaction beta-D-fructose 2,6-bisphosphate + H2O = beta-D-fructose 6-phosphate + phosphate. Fructose-bisphosphatase hydrolyzing fructose-2,6-bisphosphate as well as fructose-1,6-bisphosphate. Acts as a negative regulator of glycolysis by lowering intracellular levels of fructose-2,6-bisphosphate in a p53/TP53-dependent manner, resulting in the pentose phosphate pathway (PPP) activation and NADPH production. Contributes to the generation of reduced glutathione to cause a decrease in intracellular reactive oxygen species (ROS) content, correlating with its ability to protect cells from oxidative or metabolic stress-induced cell death. Plays a role in promoting protection against cell death during hypoxia by decreasing mitochondria ROS levels in a HK2-dependent manner through a mechanism that is independent of its fructose-bisphosphatase activity. In response to cardiac damage stress, mediates p53-induced inhibition of myocyte mitophagy through ROS levels reduction and the subsequent inactivation of BNIP3. Reduced mitophagy results in an enhanced apoptotic myocyte cell death, and exacerbates cardiac damage. Plays a role in adult intestinal regeneration; contributes to the growth, proliferation and survival of intestinal crypts following tissue ablation. Plays a neuroprotective role against ischemic brain damage by enhancing PPP flux and preserving mitochondria functions. Protects glioma cells from hypoxia- and ROS-induced cell death by inhibiting glycolysis and activating mitochondrial energy metabolism and oxygen consumption in a TKTL1-dependent and p53/TP53-independent manner. Plays a role in cancer cell survival by promoting DNA repair through activating PPP flux in a CDK5-ATM-dependent signaling pathway during hypoxia and/or genome stress-induced DNA damage responses. Involved in intestinal tumor progression. In Mus musculus (Mouse), this protein is Fructose-2,6-bisphosphatase TIGAR.